The following is a 263-amino-acid chain: MALASVLERPLSVNRRGFFGLGGRADLLDLGPGSPSDGLSLAAPSWGVPEEPRIEILHGTTTLAFKFRHGVIVAADSRATAGAYIASQTVKKVIEINPYLLGTMAGGAADCSFWERLLARQCRIYELRNKERISVAAASKLLANMVYQYKGMGLSMGTMICGWDKRGPGLYYVDSEGNRISGATFSVGSGSVYAYGVMDRGYSYDLEVEEAYDLARRAIYQATYRDAYSGGSVSLYHVREDGWIRVSSDNVADLHDKYSGSTH.

A propeptide spans 1–59 (MALASVLERPLSVNRRGFFGLGGRADLLDLGPGSPSDGLSLAAPSWGVPEEPRIEILHG) (removed in mature form). Threonine 60 serves as the catalytic Nucleophile. Bortezomib is bound at residue alanine 108.

This sequence belongs to the peptidase T1B family. In terms of assembly, the 26S proteasome consists of a 20S proteasome core and two 19S regulatory subunits. The 20S proteasome core is a barrel-shaped complex made of 28 subunits that are arranged in four stacked rings. The two outer rings are each formed by seven alpha subunits, and the two inner rings are formed by seven beta subunits. The proteolytic activity is exerted by three beta-subunits PSMB5, PSMB6 and PSMB7. Directly interacts with POMP. Interacts with ABCB1 and TAP1.

It localises to the cytoplasm. The protein localises to the nucleus. The catalysed reaction is Cleavage of peptide bonds with very broad specificity.. Functionally, component of the 20S core proteasome complex involved in the proteolytic degradation of most intracellular proteins. This complex plays numerous essential roles within the cell by associating with different regulatory particles. Associated with two 19S regulatory particles, forms the 26S proteasome and thus participates in the ATP-dependent degradation of ubiquitinated proteins. The 26S proteasome plays a key role in the maintenance of protein homeostasis by removing misfolded or damaged proteins that could impair cellular functions, and by removing proteins whose functions are no longer required. Associated with the PA200 or PA28, the 20S proteasome mediates ubiquitin-independent protein degradation. This type of proteolysis is required in several pathways including spermatogenesis (20S-PA200 complex) or generation of a subset of MHC class I-presented antigenic peptides (20S-PA28 complex). Within the 20S core complex, PSMB5 displays a chymotrypsin-like activity. The protein is Proteasome subunit beta type-5 of Bos taurus (Bovine).